Here is a 257-residue protein sequence, read N- to C-terminus: Zinc import ATP-binding protein ZnuC (257 aa).

The region spanning 6–221 is the ABC transporter domain; it reads VRLEQITVAF…AFVETFGHQV (216 aa). 38 to 45 lines the ATP pocket; sequence GPNGAGKT.

The protein belongs to the ABC transporter superfamily. Zinc importer (TC 3.A.1.15.5) family. As to quaternary structure, the complex is composed of two ATP-binding proteins (ZnuC), two transmembrane proteins (ZnuB) and a solute-binding protein (ZnuA).

The protein localises to the cell inner membrane. The enzyme catalyses Zn(2+)(out) + ATP(in) + H2O(in) = Zn(2+)(in) + ADP(in) + phosphate(in) + H(+)(in). Part of the ABC transporter complex ZnuABC involved in zinc import. Responsible for energy coupling to the transport system. In Marinobacter nauticus (strain ATCC 700491 / DSM 11845 / VT8) (Marinobacter aquaeolei), this protein is Zinc import ATP-binding protein ZnuC.